We begin with the raw amino-acid sequence, 128 residues long: NHP2-like protein 1 (128 aa).

Positions Arg-36–Arg-48 are interaction with U4 snRNA and U4atac snRNA. Positions Ser-96 to Val-128 are important for U4 snRNA-binding.

This sequence belongs to the eukaryotic ribosomal protein eL8 family. In terms of assembly, identified in the spliceosome B complex. Component of the U4/U6-U5 tri-snRNP complex. Part of the small subunit (SSU) processome, composed of more than 70 proteins and the RNA chaperone small nucleolar RNA (snoRNA) U3.

Its subcellular location is the nucleus. It localises to the nucleolus. Functionally, part of the small subunit (SSU) processome, first precursor of the small eukaryotic ribosomal subunit. During the assembly of the SSU processome in the nucleolus, many ribosome biogenesis factors, an RNA chaperone and ribosomal proteins associate with the nascent pre-rRNA and work in concert to generate RNA folding, modifications, rearrangements and cleavage as well as targeted degradation of pre-ribosomal RNA by the RNA exosome. Involved in pre-mRNA splicing as component of the spliceosome. Binds to the 5'-stem-loop of U4 snRNA and thereby contributes to spliceosome assembly. The protein undergoes a conformational change upon RNA-binding. Core component of box C/D small nucleolar ribonucleoprotein (snoRNP) complexes that function in methylation of multiple sites on ribosomal RNAs (rRNAs) and messenger RNAs (mRNAs). This chain is NHP2-like protein 1, found in Xenopus tropicalis (Western clawed frog).